A 615-amino-acid chain; its full sequence is Sorting nexin-41 (615 aa).

Residues Met1–Asn71 form a disordered region. The span at Ser42 to Ser53 shows a compositional bias: low complexity. In terms of domain architecture, PX spans Pro93 to Ser210. Arg127, Ser129, Lys153, and Arg176 together coordinate a 1,2-diacyl-sn-glycero-3-phospho-(1D-myo-inositol-3-phosphate). Disordered regions lie at residues Ala218–Pro277 and Gln432–Ser504. Composition is skewed to polar residues over residues Leu252–Asn263 and Leu434–Arg446. The span at Ser447 to Ser456 shows a compositional bias: low complexity.

It belongs to the sorting nexin family.

The protein resides in the endosome membrane. Its subcellular location is the endomembrane system. Its function is as follows. May be required for cytoplasm to vacuole transport (Cvt) and pexophagy. In Emericella nidulans (strain FGSC A4 / ATCC 38163 / CBS 112.46 / NRRL 194 / M139) (Aspergillus nidulans), this protein is Sorting nexin-41 (snx41).